A 510-amino-acid chain; its full sequence is Ectonucleoside triphosphate diphosphohydrolase 1 (510 aa).

Over 1–16 the chain is Cytoplasmic; sequence MEDIKDSKVKRFCSKN. The chain crosses the membrane as a helical span at residues 17 to 37; the sequence is ILIILGFTSILAVIALIAVGL. The Extracellular segment spans residues 38 to 478; it reads TQNKPLPENV…SPPLPHSTYI (441 aa). N-linked (GlcNAc...) asparagine glycosylation is present at asparagine 73. A disulfide bridge links cysteine 84 with cysteine 108. The active-site Proton acceptor is glutamate 174. Residues asparagine 226, asparagine 291, and asparagine 333 are each glycosylated (N-linked (GlcNAc...) asparagine). Disulfide bonds link cysteine 254–cysteine 300 and cysteine 281–cysteine 324. 2 disulfide bridges follow: cysteine 337/cysteine 342 and cysteine 391/cysteine 414. Asparagine 428 and asparagine 457 each carry an N-linked (GlcNAc...) asparagine glycan. A helical transmembrane segment spans residues 479 to 499; it reads GLMVLFSLLLVAVAITGLFIY. The Cytoplasmic portion of the chain corresponds to 500–510; the sequence is SKPSYFWKEAV.

It belongs to the GDA1/CD39 NTPase family. As to quaternary structure, homodimer; disulfide-linked. It depends on Ca(2+) as a cofactor. Mg(2+) serves as cofactor. N-glycosylated. In terms of processing, the N-terminus is blocked. Post-translationally, palmitoylated on Cys-13; which is required for caveola targeting.

The protein localises to the membrane. Its subcellular location is the caveola. The enzyme catalyses a ribonucleoside 5'-triphosphate + 2 H2O = a ribonucleoside 5'-phosphate + 2 phosphate + 2 H(+). It catalyses the reaction a ribonucleoside 5'-triphosphate + H2O = a ribonucleoside 5'-diphosphate + phosphate + H(+). The catalysed reaction is a ribonucleoside 5'-diphosphate + H2O = a ribonucleoside 5'-phosphate + phosphate + H(+). It carries out the reaction ATP + 2 H2O = AMP + 2 phosphate + 2 H(+). The enzyme catalyses ATP + H2O = ADP + phosphate + H(+). It catalyses the reaction ADP + H2O = AMP + phosphate + H(+). The catalysed reaction is CTP + 2 H2O = CMP + 2 phosphate + 2 H(+). It carries out the reaction CTP + H2O = CDP + phosphate + H(+). The enzyme catalyses CDP + H2O = CMP + phosphate + H(+). It catalyses the reaction GTP + 2 H2O = GMP + 2 phosphate + 2 H(+). The catalysed reaction is GTP + H2O = GDP + phosphate + H(+). It carries out the reaction GDP + H2O = GMP + phosphate + H(+). The enzyme catalyses ITP + 2 H2O = IMP + 2 phosphate + 2 H(+). It catalyses the reaction ITP + H2O = IDP + phosphate + H(+). The catalysed reaction is IDP + H2O = IMP + phosphate + H(+). It carries out the reaction UTP + 2 H2O = UMP + 2 phosphate + 2 H(+). The enzyme catalyses UTP + H2O = UDP + phosphate + H(+). It catalyses the reaction UDP + H2O = UMP + phosphate + H(+). In terms of biological role, catalyzes the hydrolysis of both di- and triphosphate nucleotides (NDPs and NTPs) and hydrolyze NTPs to nucleotide monophosphates (NMPs) in two distinct successive phosphate-releasing steps, with NDPs as intermediates and participates in the regulation of extracellular levels of nucleotides. By hydrolyzing proinflammatory ATP and platelet-activating ADP to AMP, it blocks platelet aggregation and supports blood flow. This Mus musculus (Mouse) protein is Ectonucleoside triphosphate diphosphohydrolase 1.